The chain runs to 207 residues: Small ribosomal subunit protein uS4c (207 aa).

One can recognise an S4 RNA-binding domain in the interval 92–153 (MRLDNILFRL…PKTYQSILSK (62 aa)).

This sequence belongs to the universal ribosomal protein uS4 family. As to quaternary structure, part of the 30S ribosomal subunit. Contacts protein S5. The interaction surface between S4 and S5 is involved in control of translational fidelity.

The protein resides in the plastid. It localises to the chloroplast. In terms of biological role, one of the primary rRNA binding proteins, it binds directly to 16S rRNA where it nucleates assembly of the body of the 30S subunit. Its function is as follows. With S5 and S12 plays an important role in translational accuracy. This chain is Small ribosomal subunit protein uS4c (rps4), found in Equisetum laevigatum (Smooth horsetail).